Consider the following 146-residue polypeptide: Protein MucA (146 aa).

Residues Ser-62 and Lys-99 each act as for autocatalytic cleavage activity in the active site.

It belongs to the peptidase S24 family.

In terms of biological role, involved in UV protection and mutation. The polypeptide is Protein MucA (mucA) (Escherichia coli).